A 332-amino-acid polypeptide reads, in one-letter code: Cell division protein ZipA (332 aa).

Topologically, residues 1–6 are periplasmic; that stretch reads MMQDLR. A helical membrane pass occupies residues 7–27; that stretch reads LILIVVGAIAIIALLLHGLWT. Residues 28–332 lie on the Cytoplasmic side of the membrane; sequence SRKERSSLFR…RIRDVLKANA (305 aa). The segment covering 40–51 has biased composition (basic and acidic residues); that stretch reads PVKRAKKARDET. Residues 40–189 form a disordered region; the sequence is PVKRAKKARD…VQPAPQQPAE (150 aa). Positions 76-88 are enriched in low complexity; that stretch reads SFDSASVDSSSFD. The segment covering 93 to 105 has biased composition (basic and acidic residues); sequence AREDVRSEAKSPF.

It belongs to the ZipA family. Interacts with FtsZ via their C-terminal domains.

It is found in the cell inner membrane. In terms of biological role, essential cell division protein that stabilizes the FtsZ protofilaments by cross-linking them and that serves as a cytoplasmic membrane anchor for the Z ring. Also required for the recruitment to the septal ring of downstream cell division proteins. This is Cell division protein ZipA from Pectobacterium atrosepticum (strain SCRI 1043 / ATCC BAA-672) (Erwinia carotovora subsp. atroseptica).